The sequence spans 148 residues: UPF0260 protein Sfri_1740 (148 aa).

It belongs to the UPF0260 family.

This Shewanella frigidimarina (strain NCIMB 400) protein is UPF0260 protein Sfri_1740.